A 505-amino-acid polypeptide reads, in one-letter code: 2,3-bisphosphoglycerate-independent phosphoglycerate mutase (505 aa).

Mn(2+) is bound by residues aspartate 11 and serine 61. Serine 61 serves as the catalytic Phosphoserine intermediate. Substrate contacts are provided by residues histidine 122, 152–153 (RD), arginine 183, arginine 189, 259–262 (RTDR), and lysine 332. Mn(2+) contacts are provided by aspartate 399, histidine 403, aspartate 440, histidine 441, and histidine 458.

Belongs to the BPG-independent phosphoglycerate mutase family. In terms of assembly, monomer. The cofactor is Mn(2+).

The catalysed reaction is (2R)-2-phosphoglycerate = (2R)-3-phosphoglycerate. The protein operates within carbohydrate degradation; glycolysis; pyruvate from D-glyceraldehyde 3-phosphate: step 3/5. Its function is as follows. Catalyzes the interconversion of 2-phosphoglycerate and 3-phosphoglycerate. The sequence is that of 2,3-bisphosphoglycerate-independent phosphoglycerate mutase from Flavobacterium johnsoniae (strain ATCC 17061 / DSM 2064 / JCM 8514 / BCRC 14874 / CCUG 350202 / NBRC 14942 / NCIMB 11054 / UW101) (Cytophaga johnsonae).